Reading from the N-terminus, the 357-residue chain is Sorbitol dehydrogenase (357 aa).

Ala-2 carries the post-translational modification N-acetylalanine. Zn(2+) is bound at residue Cys-45. Tyr-51 is a substrate binding site. Zn(2+)-binding residues include His-70, Glu-71, and Glu-156. Substrate is bound at residue Glu-156. Phosphoserine is present on Ser-169. NAD(+) contacts are provided by residues Ile-184, Asp-204, Arg-209, 273 to 275 (VGM), and 297 to 299 (VFR). Substrate is bound by residues Arg-299 and Tyr-300.

It belongs to the zinc-containing alcohol dehydrogenase family. In terms of assembly, homotetramer; dimer of dimers. Zn(2+) serves as cofactor. Expressed in liver and testis.

The protein resides in the mitochondrion membrane. The protein localises to the cell projection. Its subcellular location is the cilium. It localises to the flagellum. The enzyme catalyses keto-D-fructose + NADH + H(+) = D-sorbitol + NAD(+). It catalyses the reaction xylitol + NAD(+) = D-xylulose + NADH + H(+). The catalysed reaction is L-iditol + NAD(+) = keto-L-sorbose + NADH + H(+). Functionally, polyol dehydrogenase that catalyzes the reversible NAD(+)-dependent oxidation of various sugar alcohols. Is active with D-sorbitol (D-glucitol) leading to the C2-oxidized product D-fructose. Is a key enzyme in the polyol pathway that interconverts glucose and fructose via sorbitol, which constitutes an important alternate route for glucose metabolism. May play a role in sperm motility by using sorbitol as an alternative energy source for sperm motility. The protein is Sorbitol dehydrogenase (Sord) of Rattus norvegicus (Rat).